A 435-amino-acid chain; its full sequence is MVVNVIGAGLAGSEVVYNLGKRGVKVRLYEMRPKKMTEVHKTGYFAELVCSNSFKSEEVTNAEGLLKAEMKMMGSVVLEVAERTRVPSGKALAVDRNAFARKVTEIIEDMENVEIVREEVTSFNPDEGIWIVATGPATSEGLLSFLKELLGEDFLFFFDAVSPIVSFESIDMSRAFWGDRFGKGNDYINCPLTQEEYEELWKALVEAEVIEMEDFDRSLLFERCQPVEEIARSGKDALRYGPLRPTGLVDPRTGKEPYAVVQLRREDKEGKFYSLVGFQTRLKWGEQKKVIQKIPCLRNAEIVRYGVMHRNIYINSPRVLDPFFRLKKHPSVFFAGQITGVEGYMESAASGIYVAYNVYRILRGLSPLRLPEETMMGALFSYIIEKVEGDLKPMYANFGLLPPLSVRVRNKFERRKRLAERAMKAMREFLEKNPW.

An FAD-binding site is contributed by 7 to 12 (GAGLAG).

It belongs to the MnmG family. TrmFO subfamily. FAD is required as a cofactor.

It localises to the cytoplasm. The enzyme catalyses uridine(54) in tRNA + (6R)-5,10-methylene-5,6,7,8-tetrahydrofolate + NADH + H(+) = 5-methyluridine(54) in tRNA + (6S)-5,6,7,8-tetrahydrofolate + NAD(+). The catalysed reaction is uridine(54) in tRNA + (6R)-5,10-methylene-5,6,7,8-tetrahydrofolate + NADPH + H(+) = 5-methyluridine(54) in tRNA + (6S)-5,6,7,8-tetrahydrofolate + NADP(+). In terms of biological role, catalyzes the folate-dependent formation of 5-methyl-uridine at position 54 (M-5-U54) in all tRNAs. This is Methylenetetrahydrofolate--tRNA-(uracil-5-)-methyltransferase TrmFO from Thermotoga neapolitana (strain ATCC 49049 / DSM 4359 / NBRC 107923 / NS-E).